The following is a 43-amino-acid chain: Protein PsbN (43 aa).

Residues 7–29 traverse the membrane as a helical segment; sequence LSIALAAVCIGVTGYSIYLSFGP.

This sequence belongs to the PsbN family.

It is found in the cellular thylakoid membrane. May play a role in photosystem I and II biogenesis. This Thermosynechococcus vestitus (strain NIES-2133 / IAM M-273 / BP-1) protein is Protein PsbN.